The chain runs to 201 residues: FMN-dependent NADH:quinone oxidoreductase (201 aa).

Residues Met92–Leu95 and Ser136–Gly139 contribute to the FMN site.

It belongs to the azoreductase type 1 family. In terms of assembly, homodimer. It depends on FMN as a cofactor.

The enzyme catalyses 2 a quinone + NADH + H(+) = 2 a 1,4-benzosemiquinone + NAD(+). It carries out the reaction N,N-dimethyl-1,4-phenylenediamine + anthranilate + 2 NAD(+) = 2-(4-dimethylaminophenyl)diazenylbenzoate + 2 NADH + 2 H(+). In terms of biological role, quinone reductase that provides resistance to thiol-specific stress caused by electrophilic quinones. Its function is as follows. Also exhibits azoreductase activity. Catalyzes the reductive cleavage of the azo bond in aromatic azo compounds to the corresponding amines. In Coprothermobacter proteolyticus (strain ATCC 35245 / DSM 5265 / OCM 4 / BT), this protein is FMN-dependent NADH:quinone oxidoreductase.